Reading from the N-terminus, the 803-residue chain is Ribonucleoside-diphosphate reductase large chain (803 aa).

The region spanning 1-91 (MYVVNRKGEE…TSNLHKNTSS (91 aa)) is the ATP-cone domain. ATP-binding positions include 5-6 (NR), 11-17 (EPVSFDQ), T52, and D56. S215 contacts GDP. C216 and C442 form a disulfide bridge. DTTP-binding positions include 224 to 226 (DSI), K241, R254, and 261 to 262 (RG). N425 is a GDP binding site. Residue N425 is the Proton acceptor of the active site. C427 functions as the Cysteine radical intermediate in the catalytic mechanism. Residues E429 and 604 to 607 (TAST) contribute to the GDP site. Residue E429 is the Proton acceptor of the active site.

Belongs to the ribonucleoside diphosphate reductase large chain family. As to quaternary structure, heterodimer of a large and a small subunit.

The catalysed reaction is a 2'-deoxyribonucleoside 5'-diphosphate + [thioredoxin]-disulfide + H2O = a ribonucleoside 5'-diphosphate + [thioredoxin]-dithiol. Under complex allosteric control mediated by deoxynucleoside triphosphates and ATP binding to separate specificity and activation sites on the large subunit. The type of nucleotide bound at the specificity site determines substrate preference. It seems probable that ATP makes the enzyme reduce CDP and UDP, dGTP favors ADP reduction and dTTP favors GDP reduction. Stimulated by ATP and inhibited by dATP binding to the activity site. Its function is as follows. Provides the precursors necessary for DNA synthesis. Catalyzes the biosynthesis of deoxyribonucleotides from the corresponding ribonucleotides. This Cryptosporidium parvum protein is Ribonucleoside-diphosphate reductase large chain (RNR1).